The chain runs to 709 residues: Elongation factor G (709 aa).

The 290-residue stretch at 8–297 folds into the tr-type G domain; that stretch reads ANTRNIGIMA…AVIDYLPSPL (290 aa). Residues 17–24, 81–85, and 135–138 each bind GTP; these read AHVDAGKT, DTPGH, and NKMD.

It belongs to the TRAFAC class translation factor GTPase superfamily. Classic translation factor GTPase family. EF-G/EF-2 subfamily.

It localises to the cytoplasm. Its function is as follows. Catalyzes the GTP-dependent ribosomal translocation step during translation elongation. During this step, the ribosome changes from the pre-translocational (PRE) to the post-translocational (POST) state as the newly formed A-site-bound peptidyl-tRNA and P-site-bound deacylated tRNA move to the P and E sites, respectively. Catalyzes the coordinated movement of the two tRNA molecules, the mRNA and conformational changes in the ribosome. This is Elongation factor G from Lactococcus lactis subsp. cremoris (strain MG1363).